Consider the following 155-residue polypeptide: SsrA-binding protein (155 aa).

Belongs to the SmpB family.

It is found in the cytoplasm. Required for rescue of stalled ribosomes mediated by trans-translation. Binds to transfer-messenger RNA (tmRNA), required for stable association of tmRNA with ribosomes. tmRNA and SmpB together mimic tRNA shape, replacing the anticodon stem-loop with SmpB. tmRNA is encoded by the ssrA gene; the 2 termini fold to resemble tRNA(Ala) and it encodes a 'tag peptide', a short internal open reading frame. During trans-translation Ala-aminoacylated tmRNA acts like a tRNA, entering the A-site of stalled ribosomes, displacing the stalled mRNA. The ribosome then switches to translate the ORF on the tmRNA; the nascent peptide is terminated with the 'tag peptide' encoded by the tmRNA and targeted for degradation. The ribosome is freed to recommence translation, which seems to be the essential function of trans-translation. The chain is SsrA-binding protein from Streptococcus equi subsp. zooepidemicus (strain H70).